The following is a 487-amino-acid chain: F-box/LRR-repeat protein At1g48400 (487 aa).

The F-box domain occupies 9 to 57 (RDSISNLPDEILGKILSLLPTKVAASTSVLSKRWRNLLGLVDNLCFDES). LRR repeat units lie at residues 71–97 (SLRFCDFVDKTFALLSNSHIKKFSLSR), 125–153 (HLHATPMSFVAIETKLLTSNTLVKLTLSA), 174–199 (SILGDYTNYIRLIDGCPVLEELYMRD), 225–251 (THNPNEMIWHELIYFEAPSLVYLDYSS), 327–358 (TLHLSPDSLEVFHFCCKSMPVFNNLLNLSIES), and 359–384 (NKDKGWQVMPLLLKSCPNLHTLVIKG).

This is F-box/LRR-repeat protein At1g48400 from Arabidopsis thaliana (Mouse-ear cress).